The chain runs to 128 residues: Large ribosomal subunit protein eL8 (128 aa).

This sequence belongs to the eukaryotic ribosomal protein eL8 family. In terms of assembly, part of the 50S ribosomal subunit. Probably part of the RNase P complex.

It localises to the cytoplasm. Functionally, multifunctional RNA-binding protein that recognizes the K-turn motif in ribosomal RNA, the RNA component of RNase P, box H/ACA, box C/D and box C'/D' sRNAs. In Nitrosopumilus maritimus (strain SCM1), this protein is Large ribosomal subunit protein eL8.